The chain runs to 387 residues: uncharacterized protein (387 aa).

Disordered stretches follow at residues 1–126, 138–169, and 275–298; these read MDGR…GDDE, GNQG…RNEE, and SSIF…AGNK. A compositionally biased stretch (basic and acidic residues) spans 32 to 45; the sequence is SSDHRTSNSAESKK. Composition is skewed to polar residues over residues 49–63 and 78–93; these read SGKS…NNDN and DLSS…SKGT. Residues 155-169 are compositionally biased toward basic and acidic residues; sequence ENGKNDIEKNNRNEE. The span at 275–296 shows a compositional bias: polar residues; that stretch reads SSIFSDSQAVTTDDEGISSTAG.

The protein belongs to the ThrE exporter (TC 2.A.79) family.

This is an uncharacterized protein from Saccharomyces cerevisiae (strain ATCC 204508 / S288c) (Baker's yeast).